Here is a 1137-residue protein sequence, read N- to C-terminus: Eukaryotic translation initiation factor 3 subunit A (1137 aa).

Residues 319–501 enclose the PCI domain; that stretch reads LQRMAAHVLL…NSIYFGTDLT (183 aa). Composition is skewed to basic and acidic residues over residues 588-623 and 829-899; these read QNNA…EERE and AAEE…RGGD. Disordered regions lie at residues 588–631 and 829–1137; these read QNNA…QNEI and AAEE…VKRR. The residue at position 908 (Ser-908) is a Phosphoserine. 4 stretches are compositionally biased toward basic and acidic residues: residues 922 to 971, 985 to 1046, 1054 to 1083, and 1106 to 1127; these read RGIE…EPDS, SRDE…EPQR, DAPR…RGDQ, and AREE…KAAD.

The protein belongs to the eIF-3 subunit A family. As to quaternary structure, component of the eukaryotic translation initiation factor 3 (eIF-3) complex. The eIF-3 complex interacts with pix.

Its subcellular location is the cytoplasm. Functionally, RNA-binding component of the eukaryotic translation initiation factor 3 (eIF-3) complex, which is involved in protein synthesis of a specialized repertoire of mRNAs and, together with other initiation factors, stimulates binding of mRNA and methionyl-tRNAi to the 40S ribosome. The eIF-3 complex specifically targets and initiates translation of a subset of mRNAs involved in cell proliferation. In Drosophila yakuba (Fruit fly), this protein is Eukaryotic translation initiation factor 3 subunit A.